Reading from the N-terminus, the 193-residue chain is MPVAVMAQNPVSFQRLQEQCEEQELEAPGGIANPQVYSQLLALYLLHNDMNNARYLWKRIPPAIKSAHSELGGIWEVGQKIWQRDFPGIYTSISACQWSEAIQPVMEAVRDATRRRAFGLVSQAYTSISADDFAAFVGLSVEEAVKGVIEQGWQADLATRMVMPKKPDSAPLSLIPNEQQLARLTDYVAFLEN.

The PCI domain maps to 8-181; sequence QNPVSFQRLQ…LSLIPNEQQL (174 aa).

This sequence belongs to the CSN8 family. Component of the CSN complex, probably composed of cops1, cops2, cops3, cops4, cops5, cops6, cops7, cops8 and cops9.

Its subcellular location is the cytoplasm. The protein localises to the nucleus. In terms of biological role, component of the COP9 signalosome complex (CSN), a complex involved in various cellular and developmental processes. The CSN complex is an essential regulator of the ubiquitin (Ubl) conjugation pathway by mediating the deneddylation of the cullin subunits of E3 ligase complexes, leading to modify the Ubl ligase activity. The polypeptide is COP9 signalosome complex subunit 8 (csn8) (Xenopus tropicalis (Western clawed frog)).